A 292-amino-acid chain; its full sequence is Formamidopyrimidine-DNA glycosylase (292 aa).

Catalysis depends on Pro-2, which acts as the Schiff-base intermediate with DNA. Residue Glu-3 is the Proton donor of the active site. Lys-58 acts as the Proton donor; for beta-elimination activity in catalysis. The DNA site is built by His-98, Arg-128, and Arg-173. The FPG-type zinc-finger motif lies at Leu-258–His-292. Catalysis depends on Arg-282, which acts as the Proton donor; for delta-elimination activity.

This sequence belongs to the FPG family. Monomer. The cofactor is Zn(2+).

It carries out the reaction Hydrolysis of DNA containing ring-opened 7-methylguanine residues, releasing 2,6-diamino-4-hydroxy-5-(N-methyl)formamidopyrimidine.. The enzyme catalyses 2'-deoxyribonucleotide-(2'-deoxyribose 5'-phosphate)-2'-deoxyribonucleotide-DNA = a 3'-end 2'-deoxyribonucleotide-(2,3-dehydro-2,3-deoxyribose 5'-phosphate)-DNA + a 5'-end 5'-phospho-2'-deoxyribonucleoside-DNA + H(+). Functionally, involved in base excision repair of DNA damaged by oxidation or by mutagenic agents. Acts as a DNA glycosylase that recognizes and removes damaged bases. Has a preference for oxidized purines, such as 7,8-dihydro-8-oxoguanine (8-oxoG). Has AP (apurinic/apyrimidinic) lyase activity and introduces nicks in the DNA strand. Cleaves the DNA backbone by beta-delta elimination to generate a single-strand break at the site of the removed base with both 3'- and 5'-phosphates. The protein is Formamidopyrimidine-DNA glycosylase of Cupriavidus necator (strain ATCC 17699 / DSM 428 / KCTC 22496 / NCIMB 10442 / H16 / Stanier 337) (Ralstonia eutropha).